Reading from the N-terminus, the 224-residue chain is Phosphoglycolate phosphatase (224 aa).

Asp8 functions as the Nucleophile in the catalytic mechanism. Residues Asp8 and Asp10 each coordinate Mg(2+). Lys151 provides a ligand contact to substrate. Positions 174 and 178 each coordinate Mg(2+).

This sequence belongs to the archaeal SPP-like hydrolase family. Mg(2+) is required as a cofactor.

It carries out the reaction 2-phosphoglycolate + H2O = glycolate + phosphate. Functionally, catalyzes the dephosphorylation of 2-phosphoglycolate. In Thermoplasma volcanium (strain ATCC 51530 / DSM 4299 / JCM 9571 / NBRC 15438 / GSS1), this protein is Phosphoglycolate phosphatase.